The primary structure comprises 1177 residues: Dynein axonemal assembly factor 9 (1177 aa).

The interval 1 to 27 is disordered; that stretch reads MDVYPPRRQGLPRARSPGGSSRGSPSV. The span at 11–27 shows a compositional bias: low complexity; the sequence is LPRARSPGGSSRGSPSV.

In terms of assembly, interacts with ARL3.

Functionally, may act as an effector for ARL3. This is Dynein axonemal assembly factor 9 from Homo sapiens (Human).